A 261-amino-acid chain; its full sequence is Basic leucine zipper 19 (261 aa).

2 disordered regions span residues methionine 1–leucine 22 and glutamate 74–arginine 100. Polar residues predominate over residues phenylalanine 8–glutamate 18. The span at cysteine 88–arginine 100 shows a compositional bias: basic and acidic residues. A bZIP domain is found at glycine 89–leucine 155. The basic motif stretch occupies residues lysine 90–lysine 113. Positions leucine 117 to leucine 131 are leucine-zipper. The span at asparagine 237–serine 248 shows a compositional bias: low complexity. Residues asparagine 237–valine 261 are disordered. Basic residues predominate over residues asparagine 249–valine 261.

It localises to the nucleus. Transcription factor involved in the response to zinc ion deficiency. Binds to the consensus sequence 5'-[AG]TGTCGACA[CT]-3' also called zinc deficiency response element (ZDRE). The ZDRE sequence is conserved in the plant kingdom and present in the promoters of genes that constitute the primary response to zinc deficiency, comprising additional ZIP metal transporter genes. Required for zinc accumulation in roots. Mediates the expression of the zinc transporters ZIP3, ZIP4, ZIP5 and ZIP9 during growth in zinc-deficient conditions. ZIP9 transporter is involved in zinc uptake in roots. The chain is Basic leucine zipper 19 from Arabidopsis thaliana (Mouse-ear cress).